Reading from the N-terminus, the 365-residue chain is Galactoside alpha-(1,2)-fucosyltransferase 1 (365 aa).

Residues 1-8 (MWVPSRRH) are Cytoplasmic-facing. A helical; Signal-anchor for type II membrane protein transmembrane segment spans residues 9 to 28 (LCLTFLLVCVLAAIFFLNVY). Topologically, residues 29–365 (QDLFYSGLDL…LSPLQMLAGP (337 aa)) are lumenal. N-linked (GlcNAc...) asparagine glycosylation is found at N65, N301, and N327.

The protein belongs to the glycosyltransferase 11 family.

The protein resides in the golgi apparatus. The protein localises to the golgi stack membrane. It catalyses the reaction a beta-D-galactosyl-(1-&gt;4)-N-acetyl-beta-D-glucosaminyl derivative + GDP-beta-L-fucose = an alpha-L-Fuc-(1-&gt;2)-beta-D-Gal-(1-&gt;4)-beta-D-GlcNAc derivative + GDP + H(+). It carries out the reaction a ganglioside GA1 + GDP-beta-L-fucose = a ganglioside Fuc-GA1 + GDP + H(+). The catalysed reaction is a beta-D-Gal-(1-&gt;3)-beta-D-GlcNAc-(1-&gt;3)-beta-D-Gal-(1-&gt;4)-beta-D-Glc-(1&lt;-&gt;1')-Cer(d18:1(4E)) + GDP-beta-L-fucose = alpha-L-fucosyl-(1-&gt;2)- beta-D-galactosyl-(1-&gt;3)-N-acetyl-beta-D-glucosaminyl-(1-&gt;3)-beta-D-galactosyl-(1-&gt;4)-beta-D-glucosyl-(1&lt;-&gt;1')-N-acylsphing-4-enine + GDP + H(+). The enzyme catalyses a neolactoside nLc4Cer(d18:1(4E)) + GDP-beta-L-fucose = a neolactoside IV(2)-alpha-Fuc-nLc4Cer(d18:1(4E)) + GDP + H(+). It catalyses the reaction a ganglioside GM1 + GDP-beta-L-fucose = a ganglioside Fuc-GM1 + GDP + H(+). It carries out the reaction beta-D-galactosyl-(1-&gt;3)-N-acetyl-D-galactosamine + GDP-beta-L-fucose = alpha-L-fucosyl-(1-&gt;2)-beta-D-galactosyl-(1-&gt;3)-N-acetyl-D-galactosamine + GDP + H(+). Its pathway is protein modification; protein glycosylation. Functionally, catalyzes the transfer of L-fucose, from a guanosine diphosphate-beta-L-fucose, to the terminal galactose residue of glycoconjugates through an alpha(1,2) linkage leading to H antigen synthesis that is an intermediate substrate in the synthesis of ABO blood group antigens. H antigen is essential for maturation of the glomerular layer of the main olfactory bulb, in cell migration and early cell-cell contacts during tumor associated angiogenesis. Preferentially fucosylates soluble lactose and to a lesser extent fucosylates glycolipids gangliosides GA1 and GM1a. This chain is Galactoside alpha-(1,2)-fucosyltransferase 1, found in Sus scrofa (Pig).